The chain runs to 64 residues: Large ribosomal subunit protein bL33 (64 aa).

Belongs to the bacterial ribosomal protein bL33 family.

This Synechococcus sp. (strain JA-2-3B'a(2-13)) (Cyanobacteria bacterium Yellowstone B-Prime) protein is Large ribosomal subunit protein bL33.